Consider the following 260-residue polypeptide: Transforming acid coiled-coil-containing protein 1 (260 aa).

The interval 1–43 is disordered; sequence MSLNTTFTKEDGTEVVIPFNGSQNGHPENEEPEVEEAAEPSSS. Residues 108–249 are a coiled coil; it reads ASSEELEKAL…CDQLLNDVDV (142 aa).

This sequence belongs to the TACC family. In terms of assembly, interacts with zyg-9 to form a heterodimer. Interacts with zyg-8 to form a heterodimer. Interacts with efa-6 (via N-terminus). In terms of tissue distribution, expressed in touch neurons.

The protein resides in the cytoplasm. It localises to the cytoskeleton. It is found in the spindle pole. The protein localises to the microtubule organizing center. Its subcellular location is the centrosome. The protein resides in the chromosome. It localises to the centromere. It is found in the kinetochore. The protein localises to the cell projection. Its subcellular location is the axon. The protein resides in the perikaryon. Its function is as follows. Involved in microtubule formation, polymerization and assembly, regulating microtubule nucleation and length. Plays a role in pronuclear migration and mitotic and meiotic spindle elongation during early embryogenesis. In complex with zyg-9, functions during the early stages of embryonic development to regulate microtubule assembly throughout the cell cycle. Specifically, the complex is required for the formation and growth of astral microtubules and spindle microtubules during mitotic spindle assembly. At anaphase, the complex is required for mitotic spindle positioning in one-cell stage embryos. The complex acts in a partially redundant manner with the tac-1/zyg-8 complex to regulate microtubule assembly and processes during interphase, mitosis and meiosis in embryos. Plays a role in injury-induced axonal regrowth, regeneration and microtubule stability in PLM neurons and this may be downstream of efa-6. In Caenorhabditis elegans, this protein is Transforming acid coiled-coil-containing protein 1.